Reading from the N-terminus, the 508-residue chain is MALLSVIRRWHFREHLSIREICRRTGLSRNTIRKYLRAGGAEPKFNVPERPSKLDPFADRLSAWLKTESKKSRKQKRTMKQLHSDLVSLGYEGSYNRVAAFAREWRDDRQRELQTTGRGTFVPLAFEPGEAFQFDWSEDWAIIGNERTKLQVAHTKLSYSRAFIVRAYLLQTHEMLFDAHNHAFRVFGGIPGRGIYDNMRTAIDKVGRGKERDVNVRFMAMASHYVFEPEFCNPASGWEKGQVEKNVQDARHRFFQPVPRFPSLEALNDWLEQRCKEFWAKTPHGQMRGTIADIWVEEVPALMPASRPFDGFVEYTKRVTPTCLVHLERNRYSVPASLANRPVSLRVYPDRVVVAAEGQIVCEHRRVIDRSHDRPGQTIYDWRHYLAVVQRKPGALRNGAPFVELPDVFRTLQQYLLKKPGGDREMVDILALVLQHDEQAVLSAVDMALRSGVPTKTHVLNLLHRLVDGKSLTPPTLDAPQALTLTNEPKANVERYDTLRKTEVRHAS.

Residues 3-65 form the HTH IS21-type domain; the sequence is LLSVIRRWHF…PFADRLSAWL (63 aa). One can recognise an Integrase catalytic domain in the interval 124–299; that stretch reads LAFEPGEAFQ…TIADIWVEEV (176 aa).

It belongs to the transposase IS21/IS408/IS1162 family.

Its function is as follows. Required for the transposition of the insertion element. In Aminobacter aminovorans (Chelatobacter heintzii), this protein is Transposase (nmoT).